We begin with the raw amino-acid sequence, 256 residues long: MAWSASQYVKFEDERTRPARDLLAQVPLQKIRRAVDLGCGPGNSTELIIERYGADGVSGLDSDMNMLEAARKRLPGTAFVEADLGSWQPMEPADLLFANAVFQWLPDHLDIFDRLMDGLSPGGVLAVQMPDNLGEPSHLAMEEAAHAGPWKTAFEAKSVRRKGLPAPSAYYSRLITKASRVDVWHTIYNHPMADAAAIVEWVKGTGLMPYLAHAGERYREAFLADYLQRVEKAYPKLSDGRVLLRFPRIFMVAVKG.

The protein belongs to the methyltransferase superfamily. Tam family.

The protein localises to the cytoplasm. The catalysed reaction is trans-aconitate + S-adenosyl-L-methionine = (E)-3-(methoxycarbonyl)pent-2-enedioate + S-adenosyl-L-homocysteine. In terms of biological role, catalyzes the S-adenosylmethionine monomethyl esterification of trans-aconitate. The polypeptide is Trans-aconitate 2-methyltransferase (Rhizobium leguminosarum bv. trifolii (strain WSM2304)).